The sequence spans 403 residues: MKRDYYEILGVARSADKDEIKKAYRKLALKYHPDKNPDNKEAEEKFKEVNEAYEVLSNDDKRRRYDQFGHAGVGSSAASGSGPGGAGYGDINDIFSAFNDMFSGGGGRARTGGSPFSGFEDVFSGGFSGSGSGRRRSAGIQGTDLKIRLKLTLEEIAKGVEKTIKIKKLVTCRECNGTGSKSGKTEICPTCHGSGEVRQATKTMFGQFMNISVCPTCGGEGRVVKDRCPSCYGEGIKQGEATVKITVPAGVQDGNYLTLQGQGNAGPRGGAPGDLIVVIEEKPHELFKRNGDDIIYDLSVGFPDLVMGTKIEVPTLDGHVKLTIPAGTQPNTMLRIGGKGIGHLRGGGSGDLYVRVNVFVPKEVSGKDRDLLKELKKSTVICPNHGDENHEKSIFEKAKDIFS.

Positions 4 to 69 (DYYEILGVAR…DKRRRYDQFG (66 aa)) constitute a J domain. The segment at 159–240 (GVEKTIKIKK…CYGEGIKQGE (82 aa)) adopts a CR-type zinc-finger fold. Zn(2+) contacts are provided by cysteine 172, cysteine 175, cysteine 188, cysteine 191, cysteine 214, cysteine 217, cysteine 228, and cysteine 231. CXXCXGXG motif repeat units follow at residues 172–179 (CRECNGTG), 188–195 (CPTCHGSG), 214–221 (CPTCGGEG), and 228–235 (CPSCYGEG).

This sequence belongs to the DnaJ family. As to quaternary structure, homodimer. It depends on Zn(2+) as a cofactor.

The protein resides in the cytoplasm. Functionally, participates actively in the response to hyperosmotic and heat shock by preventing the aggregation of stress-denatured proteins and by disaggregating proteins, also in an autonomous, DnaK-independent fashion. Unfolded proteins bind initially to DnaJ; upon interaction with the DnaJ-bound protein, DnaK hydrolyzes its bound ATP, resulting in the formation of a stable complex. GrpE releases ADP from DnaK; ATP binding to DnaK triggers the release of the substrate protein, thus completing the reaction cycle. Several rounds of ATP-dependent interactions between DnaJ, DnaK and GrpE are required for fully efficient folding. Also involved, together with DnaK and GrpE, in the DNA replication of plasmids through activation of initiation proteins. The protein is Chaperone protein DnaJ of Chlorobaculum tepidum (strain ATCC 49652 / DSM 12025 / NBRC 103806 / TLS) (Chlorobium tepidum).